Consider the following 318-residue polypeptide: Ribosomal large subunit pseudouridine synthase B (318 aa).

The S4 RNA-binding domain occupies 3–75; it reads EKLQKILARA…VCRVLAYYKP (73 aa). Asp110 (nucleophile) is an active-site residue. Positions 271-318 are disordered; sequence AVKRHTEVSGRQVAGRQGSARKGSTRQNVGNAAPAATASRRSGPKKRG.

It belongs to the pseudouridine synthase RsuA family.

The enzyme catalyses uridine(2605) in 23S rRNA = pseudouridine(2605) in 23S rRNA. In terms of biological role, responsible for synthesis of pseudouridine from uracil-2605 in 23S ribosomal RNA. This Yersinia pestis protein is Ribosomal large subunit pseudouridine synthase B (rluB).